The primary structure comprises 463 residues: Nuclear hormone receptor family member nhr-3 (463 aa).

A DNA-binding region (nuclear receptor) is located at residues 50-125; that stretch reads STICSVCCDE…VGMEPDAIRP (76 aa). 2 NR C4-type zinc fingers span residues 53–73 and 89–113; these read CSVC…CFGC and CRYS…FQKC. The span at 121–131 shows a compositional bias: basic and acidic residues; the sequence is DAIRPDRDKTG. Residues 121–143 form a disordered region; it reads DAIRPDRDKTGRQKNPRRNTEGS. One can recognise an NR LBD domain in the interval 199–462; the sequence is EIENIVIQLQ…VLEELLFLDR (264 aa).

It belongs to the nuclear hormone receptor family.

The protein localises to the nucleus. Functionally, orphan nuclear receptor. This chain is Nuclear hormone receptor family member nhr-3 (nhr-3), found in Caenorhabditis elegans.